The sequence spans 843 residues: Vacuolar membrane protease (843 aa).

Residues 1 to 16 lie on the Cytoplasmic side of the membrane; that stretch reads MTNSRRHIFERICAKA. Residues 17-37 traverse the membrane as a helical segment; it reads FQSSLTCSIFGFTVLLILYLL. Over 38-347 the chain is Vacuolar; it reads DWKRIAQVPG…LAFGKYWQLN (310 aa). Asparagine 96, asparagine 109, and asparagine 117 each carry an N-linked (GlcNAc...) asparagine glycan. Zn(2+)-binding residues include histidine 147 and aspartate 159. Glutamate 191 (proton acceptor) is an active-site residue. Position 192 (glutamate 192) interacts with Zn(2+). Asparagine 209 carries an N-linked (GlcNAc...) asparagine glycan. Glutamate 217 is a Zn(2+) binding site. A glycan (N-linked (GlcNAc...) asparagine) is linked at asparagine 275. Histidine 292 provides a ligand contact to Zn(2+). A glycan (N-linked (GlcNAc...) asparagine) is linked at asparagine 322. The chain crosses the membrane as a helical span at residues 348-368; it reads LPIYQVLNIIFAVICPIVLLL. Topologically, residues 369-386 are cytoplasmic; it reads TLIRFPSLYEQLKKPRYT. Residues 387–407 traverse the membrane as a helical segment; that stretch reads VCFVVSCIFVSIFDTLTVLLL. Topologically, residues 408 to 417 are vacuolar; sequence TWINPYVINS. Residues 418–438 traverse the membrane as a helical segment; it reads HTGLILALFYLTNLIALAFSF. Topologically, residues 439–456 are cytoplasmic; it reads RAAATHSKLSSEDLSSIE. Residues 457–477 form a helical membrane-spanning segment; the sequence is IVFIWYAQILWYLVFIVSVIL. Residues 478–484 lie on the Vacuolar side of the membrane; it reads SIYFQLG. The helical transmembrane segment at 485-505 threads the bilayer; it reads STYWVTLSYLCTFTCCIMTII. Residues 506–566 lie on the Cytoplasmic side of the membrane; that stretch reads RINYFVDNVV…NRAHVKLIDN (61 aa). A helical membrane pass occupies residues 567 to 587; sequence IWTVIYFIFNVPFPVFLCYDI. Over 588–608 the chain is Vacuolar; the sequence is LVETILPAGSQTLTDSVFSSK. A helical membrane pass occupies residues 609–629; sequence LYKLVIFVVFLSLVNSGPFIF. At 630–636 the chain is on the cytoplasmic side; sequence RALSKKS. The helical transmembrane segment at 637–657 threads the bilayer; it reads LAVLTMLWITLFVQALSVNPF. Topologically, residues 658 to 843 are vacuolar; sequence TESAPLKLSF…LLKVKSSIVI (186 aa). N-linked (GlcNAc...) asparagine glycosylation is found at asparagine 677, asparagine 703, asparagine 707, asparagine 754, and asparagine 788.

The protein belongs to the peptidase M28 family. The cofactor is Zn(2+).

Its subcellular location is the membrane. The protein resides in the vacuole membrane. In terms of biological role, may be involved in vacuolar sorting and osmoregulation. The sequence is that of Vacuolar membrane protease from Schizosaccharomyces pombe (strain 972 / ATCC 24843) (Fission yeast).